The chain runs to 239 residues: tRNA (guanine-N(7)-)-methyltransferase (239 aa).

S-adenosyl-L-methionine-binding residues include Glu69, Glu94, Asp121, and Asp144. Residue Asp144 is part of the active site. Residue Lys148 participates in substrate binding. The segment at 150 to 155 (RHNKRR) is interaction with RNA. Residues Asp180 and 217–220 (TKFE) contribute to the substrate site.

This sequence belongs to the class I-like SAM-binding methyltransferase superfamily. TrmB family. In terms of assembly, monomer.

It catalyses the reaction guanosine(46) in tRNA + S-adenosyl-L-methionine = N(7)-methylguanosine(46) in tRNA + S-adenosyl-L-homocysteine. It functions in the pathway tRNA modification; N(7)-methylguanine-tRNA biosynthesis. Catalyzes the formation of N(7)-methylguanine at position 46 (m7G46) in tRNA. The protein is tRNA (guanine-N(7)-)-methyltransferase of Escherichia coli O6:K15:H31 (strain 536 / UPEC).